Consider the following 424-residue polypeptide: Serine--tRNA ligase (424 aa).

Residues 109-129 are disordered; that stretch reads QEDVPYGESEEDNREERKWGD. 231 to 233 contacts L-serine; sequence TAE. 262-264 is a binding site for ATP; sequence RSE. Residue Glu-285 coordinates L-serine. 349 to 352 serves as a coordination point for ATP; sequence EISS. Ser-385 is a binding site for L-serine.

This sequence belongs to the class-II aminoacyl-tRNA synthetase family. Type-1 seryl-tRNA synthetase subfamily. Homodimer. The tRNA molecule binds across the dimer.

The protein localises to the cytoplasm. It carries out the reaction tRNA(Ser) + L-serine + ATP = L-seryl-tRNA(Ser) + AMP + diphosphate + H(+). It catalyses the reaction tRNA(Sec) + L-serine + ATP = L-seryl-tRNA(Sec) + AMP + diphosphate + H(+). It participates in aminoacyl-tRNA biosynthesis; selenocysteinyl-tRNA(Sec) biosynthesis; L-seryl-tRNA(Sec) from L-serine and tRNA(Sec): step 1/1. Catalyzes the attachment of serine to tRNA(Ser). Is also able to aminoacylate tRNA(Sec) with serine, to form the misacylated tRNA L-seryl-tRNA(Sec), which will be further converted into selenocysteinyl-tRNA(Sec). The chain is Serine--tRNA ligase from Shouchella clausii (strain KSM-K16) (Alkalihalobacillus clausii).